Consider the following 878-residue polypeptide: Glycogen [starch] synthase (878 aa).

Residue Lys-61 coordinates UDP-alpha-D-glucose. Disordered regions lie at residues 637–721 (PPKP…NVIP) and 746–878 (NEFK…KSLK). Composition is skewed to low complexity over residues 641–656 (ISRSPSPSPSSSLKLS) and 666–676 (QQQQQQQQPQP). Over residues 677–692 (IGTTINLIPPSSNVSV) the composition is skewed to polar residues. Low complexity-rich tracts occupy residues 693–715 (TPTTTPTTTTTATTATTAPITTP), 746–781 (NEFKKQQQQQQQSKTPTTPTTTSTTTTTPSTTAAAT), 795–830 (PNTSSFIPTNKGSTATTTTTTATPTPTPSNNTNGKP), and 838–878 (TKSN…KSLK).

The protein belongs to the glycosyltransferase 3 family.

The catalysed reaction is [(1-&gt;4)-alpha-D-glucosyl](n) + UDP-alpha-D-glucose = [(1-&gt;4)-alpha-D-glucosyl](n+1) + UDP + H(+). The protein operates within glycan biosynthesis; glycogen biosynthesis. Catalyzes the formation of apha-1,4 glycosidic bonds adding glucose residue from UDPG to the growing chain of glycogen. The sequence is that of Glycogen [starch] synthase (glcS) from Dictyostelium discoideum (Social amoeba).